A 321-amino-acid polypeptide reads, in one-letter code: NADPH-dependent D-xylose reductase (321 aa).

Catalysis depends on Y50, which acts as the Proton donor. Position 112 (H112) interacts with substrate. Residues 167-168 (SN), 216-225 (SSFGPQSFVE), and 272-282 (KSNKKERLLGN) contribute to the NADP(+) site.

This sequence belongs to the aldo/keto reductase family.

It catalyses the reaction xylitol + NAD(+) = D-xylose + NADH + H(+). It carries out the reaction xylitol + NADP(+) = D-xylose + NADPH + H(+). The protein operates within carbohydrate metabolism; D-xylose degradation. Its function is as follows. Reduces D-xylose into xylitol. Preferentially utilizes NADPH as a cosubstrate. The chain is NADPH-dependent D-xylose reductase (XYL1) from Candida boidinii (Yeast).